The sequence spans 27 residues: iraD leader peptide (27 aa).

A short protein whose stop codon overlaps with the start codon of downstream iraD; its mRNA secondary structure is predicted to fold and sequester the Shine-Dalgarno sequence of iraD. When this protein is expressed the downstream iraD is also expressed due to ribosomal coupling. This Escherichia coli (strain K12) protein is iraD leader peptide (idlP).